The sequence spans 176 residues: Shikimate kinase (176 aa).

14 to 19 (GAGKST) contributes to the ATP binding site. Ser18 serves as a coordination point for Mg(2+). Asp36, Arg60, and Gly83 together coordinate substrate. Residue Arg121 coordinates ATP. Position 140 (Arg140) interacts with substrate.

This sequence belongs to the shikimate kinase family. In terms of assembly, monomer. The cofactor is Mg(2+).

It is found in the cytoplasm. The catalysed reaction is shikimate + ATP = 3-phosphoshikimate + ADP + H(+). It participates in metabolic intermediate biosynthesis; chorismate biosynthesis; chorismate from D-erythrose 4-phosphate and phosphoenolpyruvate: step 5/7. Functionally, catalyzes the specific phosphorylation of the 3-hydroxyl group of shikimic acid using ATP as a cosubstrate. This Francisella tularensis subsp. tularensis (strain FSC 198) protein is Shikimate kinase.